The sequence spans 72 residues: Keratin-associated protein 19-5 (72 aa).

The protein belongs to the KRTAP type 19 family. Interacts with hair keratins.

Functionally, in the hair cortex, hair keratin intermediate filaments are embedded in an interfilamentous matrix, consisting of hair keratin-associated proteins (KRTAP), which are essential for the formation of a rigid and resistant hair shaft through their extensive disulfide bond cross-linking with abundant cysteine residues of hair keratins. The matrix proteins include the high-sulfur and high-glycine-tyrosine keratins. This is Keratin-associated protein 19-5 (KRTAP19-5) from Homo sapiens (Human).